Consider the following 99-residue polypeptide: Aspartyl/glutamyl-tRNA(Asn/Gln) amidotransferase subunit C (99 aa).

The protein belongs to the GatC family. In terms of assembly, heterotrimer of A, B and C subunits.

The enzyme catalyses L-glutamyl-tRNA(Gln) + L-glutamine + ATP + H2O = L-glutaminyl-tRNA(Gln) + L-glutamate + ADP + phosphate + H(+). It catalyses the reaction L-aspartyl-tRNA(Asn) + L-glutamine + ATP + H2O = L-asparaginyl-tRNA(Asn) + L-glutamate + ADP + phosphate + 2 H(+). Its function is as follows. Allows the formation of correctly charged Asn-tRNA(Asn) or Gln-tRNA(Gln) through the transamidation of misacylated Asp-tRNA(Asn) or Glu-tRNA(Gln) in organisms which lack either or both of asparaginyl-tRNA or glutaminyl-tRNA synthetases. The reaction takes place in the presence of glutamine and ATP through an activated phospho-Asp-tRNA(Asn) or phospho-Glu-tRNA(Gln). This chain is Aspartyl/glutamyl-tRNA(Asn/Gln) amidotransferase subunit C, found in Burkholderia lata (strain ATCC 17760 / DSM 23089 / LMG 22485 / NCIMB 9086 / R18194 / 383).